Consider the following 1273-residue polypeptide: Inverted formin-2 (1273 aa).

Disordered regions lie at residues 1–30 (MSVKEGAQRKWAALKEKLGPQDSDPTEANL), 346–387 (GRPR…GQQP), 427–559 (LSSS…PLPG), 960–999 (NKDRKEQMAKAERRKQQLAEEEARRPRDEDGKPIRKGPGK), and 1021–1273 (KTAR…CVIQ). Ser2 is subject to N-acetylserine. One can recognise a GBD/FH3 domain in the interval 2–330 (SVKEGAQRKW…RAVLLASDAQ (329 aa)). Position 351 is a phosphoserine (Ser351). Residues 359 to 382 (SVQTNSVQNQGSSSQNTTTPTTKV) are compositionally biased toward low complexity. The FH1 domain maps to 421-564 (PLPTPPLSSS…PPLPGFSVPS (144 aa)). Pro residues-rich tracts occupy residues 433–516 (VLPP…PLPS) and 524–558 (QPPPPPPPPLPGMCPVPPPPPLPRAGQIPPPPPLP). In terms of domain architecture, FH2 spans 589–979 (HRRVNPPTLR…AERRKQQLAE (391 aa)). The stretch at 907 to 984 (EASQELDKVF…QQLAEEEARR (78 aa)) forms a coiled coil. The 16-residue stretch at 1007–1022 (DALLADIRKGFQLRKT) folds into the WH2 domain. A compositionally biased stretch (polar residues) spans 1047–1059 (ATASNPTQGTNHP). Positions 1088–1101 (SKEEDGPPALERRS) are enriched in basic and acidic residues. Phosphoserine occurs at positions 1172 and 1174. Positions 1195-1204 (GEDEDGEDTA) are enriched in acidic residues. The residue at position 1203 (Thr1203) is a Phosphothreonine. 2 positions are modified to phosphoserine: Ser1216 and Ser1218. Phosphothreonine is present on residues Thr1223 and Thr1230. The segment covering 1242 to 1251 (TSKRRKKRPS) has biased composition (basic residues).

Belongs to the formin homology family. Interacts with profilin and actin at the FH1 and FH2 domains respectively. Interacts with DAAM2.

The protein resides in the cytoplasm. It is found in the perinuclear region. With respect to regulation, phosphate inhibits both the depolymerization and severing activities. Functionally, severs actin filaments and accelerates their polymerization and depolymerization. In Mus musculus (Mouse), this protein is Inverted formin-2 (Inf2).